Consider the following 458-residue polypeptide: Phosphoglucosamine mutase (458 aa).

S106 (phosphoserine intermediate) is an active-site residue. Residues S106, D247, D249, and D251 each coordinate Mg(2+). S106 is subject to Phosphoserine.

This sequence belongs to the phosphohexose mutase family. Mg(2+) is required as a cofactor. In terms of processing, activated by phosphorylation.

The enzyme catalyses alpha-D-glucosamine 1-phosphate = D-glucosamine 6-phosphate. Functionally, catalyzes the conversion of glucosamine-6-phosphate to glucosamine-1-phosphate. The polypeptide is Phosphoglucosamine mutase (Chlamydia abortus (strain DSM 27085 / S26/3) (Chlamydophila abortus)).